The following is a 318-amino-acid chain: Trans-prenyltransferase (318 aa).

A helical transmembrane segment spans residues 1–21; the sequence is MLHLIYISIIVVLIIILISYT. Positions 85, 88, and 122 each coordinate isopentenyl diphosphate. 2 residues coordinate Mg(2+): Asp-129 and Asp-135. Arg-140 is a dimethylallyl diphosphate binding site. Residue Arg-141 coordinates isopentenyl diphosphate. Dimethylallyl diphosphate contacts are provided by Lys-216, Thr-217, and Gln-254.

The protein belongs to the FPP/GGPP synthase family. Asfivirus trans-prenyltransferase subfamily. Mg(2+) is required as a cofactor.

The protein localises to the host endoplasmic reticulum. Its subcellular location is the host membrane. The enzyme catalyses isopentenyl diphosphate + dimethylallyl diphosphate = (2E)-geranyl diphosphate + diphosphate. The catalysed reaction is isopentenyl diphosphate + (2E)-geranyl diphosphate = (2E,6E)-farnesyl diphosphate + diphosphate. It catalyses the reaction isopentenyl diphosphate + (2E,6E)-farnesyl diphosphate = (2E,6E,10E)-geranylgeranyl diphosphate + diphosphate. It carries out the reaction isopentenyl diphosphate + (2E,6E,10E)-geranylgeranyl diphosphate = (2E,6E,10E,14E)-geranylfarnesyl diphosphate + diphosphate. Its pathway is isoprenoid biosynthesis; farnesyl diphosphate biosynthesis; farnesyl diphosphate from geranyl diphosphate and isopentenyl diphosphate: step 1/1. It functions in the pathway isoprenoid biosynthesis; geranyl diphosphate biosynthesis; geranyl diphosphate from dimethylallyl diphosphate and isopentenyl diphosphate: step 1/1. The protein operates within isoprenoid biosynthesis; geranylgeranyl diphosphate biosynthesis; geranylgeranyl diphosphate from farnesyl diphosphate and isopentenyl diphosphate: step 1/1. In terms of biological role, trans-prenyltransferase that catalyzes the sequential condensation of isopentenyl diphosphate (IPP) with different allylic diphosphates, such as dimethylallyl diphosphate (DMAPP), geranyl diphosphate (GPP), farnesyl diphosphate (FPP) and geranylgeranyl diphosphate (GGPP), farnesyl diphosphate being the best allylic substrate. The sequence is that of Trans-prenyltransferase from Ornithodoros (relapsing fever ticks).